Consider the following 256-residue polypeptide: Thiazole synthase (256 aa).

Lys99 (schiff-base intermediate with DXP) is an active-site residue. 1-deoxy-D-xylulose 5-phosphate-binding positions include Gly160, 186–187 (AG), and 208–209 (NT).

The protein belongs to the ThiG family. In terms of assembly, homotetramer. Forms heterodimers with either ThiH or ThiS.

It localises to the cytoplasm. The enzyme catalyses [ThiS sulfur-carrier protein]-C-terminal-Gly-aminoethanethioate + 2-iminoacetate + 1-deoxy-D-xylulose 5-phosphate = [ThiS sulfur-carrier protein]-C-terminal Gly-Gly + 2-[(2R,5Z)-2-carboxy-4-methylthiazol-5(2H)-ylidene]ethyl phosphate + 2 H2O + H(+). The protein operates within cofactor biosynthesis; thiamine diphosphate biosynthesis. Catalyzes the rearrangement of 1-deoxy-D-xylulose 5-phosphate (DXP) to produce the thiazole phosphate moiety of thiamine. Sulfur is provided by the thiocarboxylate moiety of the carrier protein ThiS. In vitro, sulfur can be provided by H(2)S. In Neorickettsia sennetsu (strain ATCC VR-367 / Miyayama) (Ehrlichia sennetsu), this protein is Thiazole synthase.